Reading from the N-terminus, the 876-residue chain is Probable LRR receptor-like protein kinase At1g51890 (876 aa).

A signal peptide spans 1–19 (MRFLSFLIFVFAVLGLVQA). Over 20–500 (QDQSGFISLD…TGKNSTNVVA (481 aa)) the chain is Extracellular. Residues asparagine 45, asparagine 90, asparagine 138, asparagine 177, asparagine 251, asparagine 259, asparagine 284, asparagine 290, asparagine 327, asparagine 335, asparagine 397, asparagine 412, and asparagine 417 are each glycosylated (N-linked (GlcNAc...) asparagine). LRR repeat units follow at residues 407–430 (QIISLNLSGSNLSGTITSDISKLT), 431–453 (HLRELDLSNNDLSGDIPFVFSDM), and 455–476 (NLTLINLSGNKNLNRSVPETLQ). N-linked (GlcNAc...) asparagine glycans are attached at residues asparagine 455, asparagine 460, asparagine 468, asparagine 481, and asparagine 494. The chain crosses the membrane as a helical span at residues 501-521 (IAASVASVFAVLVILAIVFVV). The Cytoplasmic portion of the chain corresponds to 522–872 (IRKKQRTNEA…FSPSSASDFS (351 aa)). Residue threonine 561 is modified to Phosphothreonine. The Protein kinase domain maps to 570–842 (KNFERVLGKG…HVVMELNECL (273 aa)). Residues 576 to 584 (LGKGGFGTV) and lysine 597 contribute to the ATP site. Phosphotyrosine is present on tyrosine 642. Catalysis depends on aspartate 694, which acts as the Proton acceptor. A phosphothreonine mark is found at threonine 729 and threonine 734. Tyrosine 742 carries the post-translational modification Phosphotyrosine.

The protein belongs to the protein kinase superfamily. Ser/Thr protein kinase family.

The protein resides in the cell membrane. The enzyme catalyses L-seryl-[protein] + ATP = O-phospho-L-seryl-[protein] + ADP + H(+). It carries out the reaction L-threonyl-[protein] + ATP = O-phospho-L-threonyl-[protein] + ADP + H(+). This chain is Probable LRR receptor-like protein kinase At1g51890, found in Arabidopsis thaliana (Mouse-ear cress).